The following is a 718-amino-acid chain: Cyclomaltodextrin glucanotransferase (718 aa).

The first 34 residues, 1–34, serve as a signal peptide directing secretion; sequence MFQMAKRAFLSTTLTLGLLAGSALPFLPASAVYA. The interval 35 to 172 is A1; the sequence is DPDTAVTNKQ…GIKIVIDFAP (138 aa). 4 residues coordinate Ca(2+): D61, N63, N66, and N67. A disulfide bond links C77 and C84. Positions 85 and 87 each coordinate Ca(2+). 134-135 contributes to the substrate binding site; sequence YW. N173 lines the Ca(2+) pocket. The segment at 173-236 is b; sequence NHTSPAMETD…NLYDLADFNH (64 aa). H174 contacts substrate. Residue I224 participates in Ca(2+) binding. Substrate-binding positions include 227–230 and D230; that span reads NLYD. D233 lines the Ca(2+) pocket. An A2 region spans residues 237-440; sequence NNATIDKYFK…LRKSNPAIAY (204 aa). Residue R261 participates in substrate binding. The active-site Nucleophile is the D263. Residues 266–267 and H267 each bind substrate; that span reads KH. Residue H267 coordinates Ca(2+). The Proton donor role is filled by E291. Substrate is bound by residues H361, D405, and R409. Residues 441 to 528 form a c region; the sequence is GSTQQRWINN…ATAVWQYTTA (88 aa). Residues 529 to 614 are d; sequence ETTPTIGHVG…SNAYNNFTIL (86 aa). Residues 532–612 enclose the IPT/TIG domain; it reads PTIGHVGPVM…VNSNAYNNFT (81 aa). Positions 613–718 constitute a CBM20 domain; sequence ILTGDQVTVR…GTATVTVNWQ (106 aa). The interval 615–718 is e; sequence TGDQVTVRFV…GTATVTVNWQ (104 aa).

This sequence belongs to the glycosyl hydrolase 13 family. Monomer. Requires Ca(2+) as cofactor.

The protein localises to the secreted. It carries out the reaction Cyclizes part of a (1-&gt;4)-alpha-D-glucan chain by formation of a (1-&gt;4)-alpha-D-glucosidic bond.. This chain is Cyclomaltodextrin glucanotransferase, found in Niallia circulans (Bacillus circulans).